Consider the following 126-residue polypeptide: uncharacterized protein (126 aa).

3 helical membrane-spanning segments follow: residues 4-24 (LIIAGILLLIKAMIFCIVNIL), 42-62 (AITIISSSVLYFLLSYYIINP), and 64-84 (ISASIIFDDCFSIFMLSSYTV).

It is found in the membrane. This is an uncharacterized protein from Saccharomyces cerevisiae (strain ATCC 204508 / S288c) (Baker's yeast).